A 465-amino-acid polypeptide reads, in one-letter code: ATP synthase subunit beta (465 aa).

Residue 152-159 coordinates ATP; sequence GGAGVGKT.

It belongs to the ATPase alpha/beta chains family. F-type ATPases have 2 components, CF(1) - the catalytic core - and CF(0) - the membrane proton channel. CF(1) has five subunits: alpha(3), beta(3), gamma(1), delta(1), epsilon(1). CF(0) has three main subunits: a(1), b(2) and c(9-12). The alpha and beta chains form an alternating ring which encloses part of the gamma chain. CF(1) is attached to CF(0) by a central stalk formed by the gamma and epsilon chains, while a peripheral stalk is formed by the delta and b chains.

The protein resides in the cell inner membrane. The enzyme catalyses ATP + H2O + 4 H(+)(in) = ADP + phosphate + 5 H(+)(out). Produces ATP from ADP in the presence of a proton gradient across the membrane. The catalytic sites are hosted primarily by the beta subunits. This is ATP synthase subunit beta from Campylobacter curvus (strain 525.92).